A 338-amino-acid polypeptide reads, in one-letter code: Heat-inducible transcription repressor HrcA (338 aa).

It belongs to the HrcA family.

In terms of biological role, negative regulator of class I heat shock genes (grpE-dnaK-dnaJ and groELS operons). Prevents heat-shock induction of these operons. In Bacillus cereus (strain AH187), this protein is Heat-inducible transcription repressor HrcA.